Consider the following 455-residue polypeptide: Probable glycine dehydrogenase (decarboxylating) subunit 1 (455 aa).

The protein belongs to the GcvP family. N-terminal subunit subfamily. As to quaternary structure, the glycine cleavage system is composed of four proteins: P, T, L and H. In this organism, the P 'protein' is a heterodimer of two subunits.

The catalysed reaction is N(6)-[(R)-lipoyl]-L-lysyl-[glycine-cleavage complex H protein] + glycine + H(+) = N(6)-[(R)-S(8)-aminomethyldihydrolipoyl]-L-lysyl-[glycine-cleavage complex H protein] + CO2. Its function is as follows. The glycine cleavage system catalyzes the degradation of glycine. The P protein binds the alpha-amino group of glycine through its pyridoxal phosphate cofactor; CO(2) is released and the remaining methylamine moiety is then transferred to the lipoamide cofactor of the H protein. This Saccharolobus solfataricus (strain ATCC 35092 / DSM 1617 / JCM 11322 / P2) (Sulfolobus solfataricus) protein is Probable glycine dehydrogenase (decarboxylating) subunit 1.